We begin with the raw amino-acid sequence, 607 residues long: Frizzled and smoothened-like protein J (607 aa).

An N-terminal signal peptide occupies residues 1–26 (MVSNKNLLPIIYIFFIILYFGDVAKS). Residues 27–247 (QYFPLDKGAT…QWRNIYRLSD (221 aa)) are Extracellular-facing. One can recognise an FZ domain in the interval 32 to 182 (DKGATCQKYR…LSYTNTCENT (151 aa)). 3 cysteine pairs are disulfide-bonded: Cys37–Cys108, Cys50–Cys101, and Cys127–Cys179. Asn63, Asn133, Asn155, Asn164, Asn190, and Asn222 each carry an N-linked (GlcNAc...) asparagine glycan. A helical membrane pass occupies residues 248 to 268 (VLSILSCILTLFLVITLGIIN). The Cytoplasmic segment spans residues 269-276 (PKVSRFDK). A helical transmembrane segment spans residues 277 to 297 (INVMLLSSIFLQAFSGALMTF). Asn298 carries N-linked (GlcNAc...) asparagine glycosylation. Residues 298–330 (NGTENTLCPEDGRFASYIDRMCVATGFLLHGSS) lie on the Extracellular side of the membrane. Residues 331 to 351 (LLVVQWWCVLSFEVWFTIFQV) traverse the membrane as a helical segment. Over 352-358 (GKKQKDR) the chain is Cytoplasmic. Residues 359 to 379 (FIYYLVASLIIAWIPPIVSIS) traverse the membrane as a helical segment. Topologically, residues 380–401 (KNEYSGGPANPFCWLTTFNYRR) are extracellular. The chain crosses the membrane as a helical span at residues 402–422 (FAFWLPMGIFLCLGGVFLILL). Residues 423 to 451 (MREIYVIVSGNVQSTKESRFKVLKMEAKP) lie on the Cytoplasmic side of the membrane. A helical membrane pass occupies residues 452–472 (IISLIMYFSCLLYLFIYDQWI). At 473–508 (NNHMHVYTDSIPSYALCLLTSTSTNDCLLKAPDITG) the chain is on the extracellular side. The helical transmembrane segment at 509 to 529 (LGYFIYSIRVFGVYAFIIYGI) threads the bilayer. The Cytoplasmic portion of the chain corresponds to 530 to 607 (SKKTLQIWKY…VELDSNSDAL (78 aa)). A Lys-Thr-X-X-X-Trp motif, mediates interaction with the PDZ domain of Dvl family members motif is present at residues 532-537 (KTLQIW). Positions 559–575 (TAKSSNSNNSSTTNNIS) are enriched in low complexity. The disordered stretch occupies residues 559 to 607 (TAKSSNSNNSSTTNNISVKASSNMEYETRQENENGDSQSVELDSNSDAL). Residues 593–607 (GDSQSVELDSNSDAL) are compositionally biased toward polar residues.

Belongs to the G-protein coupled receptor Fz/Smo family.

It localises to the membrane. The sequence is that of Frizzled and smoothened-like protein J (fslJ-1) from Dictyostelium discoideum (Social amoeba).